The sequence spans 186 residues: ADP-ribosylation factor-like protein 8A (186 aa).

Positions 1-19 (MIALFNKLLDWFKALFWKE) form an intramembrane region, note=Mediates targeting to membranes. GTP-binding positions include 29–35 (QYSGKTT), 71–75 (DIGGQ), and 130–133 (NKRD).

It belongs to the small GTPase superfamily. Arf family. Interacts with PLEKHM1. When GTP-bound, interacts with RUFY3 and RUFY4, but not with RUFY1, nor RUFY2.

Its subcellular location is the late endosome membrane. The protein localises to the lysosome membrane. It localises to the cytoplasm. It is found in the cytoskeleton. The protein resides in the spindle. Its subcellular location is the cell projection. The protein localises to the axon. It localises to the synapse. Its function is as follows. Plays a role in lysosomes motility. In neurons, mediates the anterograde axonal long-range transport of presynaptic lysosome-related vesicles required for presynaptic biogenesis and synaptic function. May play a role in chromosome segregation. The protein is ADP-ribosylation factor-like protein 8A (Arl8a) of Mus musculus (Mouse).